The primary structure comprises 95 residues: Large ribosomal subunit protein bL21 (95 aa).

It belongs to the bacterial ribosomal protein bL21 family. As to quaternary structure, part of the 50S ribosomal subunit. Contacts protein L20.

Functionally, this protein binds to 23S rRNA in the presence of protein L20. The polypeptide is Large ribosomal subunit protein bL21 (Rubrobacter xylanophilus (strain DSM 9941 / JCM 11954 / NBRC 16129 / PRD-1)).